The primary structure comprises 502 residues: ATP synthase subunit alpha (502 aa).

169-176 is an ATP binding site; the sequence is GDRQTGKT.

This sequence belongs to the ATPase alpha/beta chains family. As to quaternary structure, F-type ATPases have 2 components, CF(1) - the catalytic core - and CF(0) - the membrane proton channel. CF(1) has five subunits: alpha(3), beta(3), gamma(1), delta(1), epsilon(1). CF(0) has three main subunits: a(1), b(2) and c(9-12). The alpha and beta chains form an alternating ring which encloses part of the gamma chain. CF(1) is attached to CF(0) by a central stalk formed by the gamma and epsilon chains, while a peripheral stalk is formed by the delta and b chains.

The protein localises to the cell membrane. The enzyme catalyses ATP + H2O + 4 H(+)(in) = ADP + phosphate + 5 H(+)(out). Its function is as follows. Produces ATP from ADP in the presence of a proton gradient across the membrane. The alpha chain is a regulatory subunit. This chain is ATP synthase subunit alpha, found in Staphylococcus aureus (strain bovine RF122 / ET3-1).